An 801-amino-acid chain; its full sequence is Palmitoyl thioesterase CPT1C (801 aa).

Residues methionine 1 to aspartate 49 are Cytoplasmic-facing. The chain crosses the membrane as a helical span at residues phenylalanine 50–glutamine 70. Topologically, residues leucine 71–glycine 103 are mitochondrial intermembrane. A helical membrane pass occupies residues leucine 104–valine 124. The Cytoplasmic portion of the chain corresponds to alanine 125–leucine 801. Histidine 469 acts as the Proton acceptor in catalysis. Glycine 551–aspartate 563 contributes to the CoA binding site. (R)-carnitine is bound by residues tyrosine 585, serine 587, and threonine 598. The segment at leucine 760–leucine 801 is required for interaction with GRIA1.

The protein belongs to the carnitine/choline acetyltransferase family. In terms of assembly, peripherally associated with AMPAR complex. AMPAR complex consists of an inner core made of 4 pore-forming GluA/GRIA proteins (GRIA1, GRIA2, GRIA3 and GRIA4) and 4 major auxiliary subunits arranged in a twofold symmetry. One of the two pairs of distinct binding sites is occupied either by CNIH2, CNIH3 or CACNG2, CACNG3. The other harbors CACNG2, CACNG3, CACNG4, CACNG8 or GSG1L. This inner core of AMPAR complex is complemented by outer core constituents binding directly to the GluA/GRIA proteins at sites distinct from the interaction sites of the inner core constituents. Outer core constituents include at least PRRT1, PRRT2, CKAMP44/SHISA9, FRRS1L and NRN1. The proteins of the inner and outer core serve as a platform for other, more peripherally associated AMPAR constituents, including CPT1C. Alone or in combination, these auxiliary subunits control the gating and pharmacology of the AMPAR complex and profoundly impact their biogenesis and protein processing. Interacts with SACM1L; the interaction regulates SACM1L phosphatidylinositol-3-phosphatase activity and translocation to endoplasmic reticulum/trans Golgi network in a malonyl-CoA dependent manner. Interacts with ATL1. In terms of tissue distribution, expressed in brain (at protein level).

Its subcellular location is the synapse. The protein resides in the cell projection. It is found in the dendrite. The protein localises to the axon. It localises to the endoplasmic reticulum membrane. The enzyme catalyses S-hexadecanoyl-L-cysteinyl-[protein] + H2O = L-cysteinyl-[protein] + hexadecanoate + H(+). Its function is as follows. Palmitoyl thioesterase specifically expressed in the endoplasmic reticulum of neurons. Modulates the trafficking of the glutamate receptor, AMPAR, to plasma membrane through depalmitoylation of GRIA1. Also regulates AMPR trafficking through the regulation of SACM1L phosphatidylinositol-3-phosphatase activity by interaction in a malonyl-CoA dependent manner. Binds malonyl-CoA and couples malonyl-CoA to ceramide levels, necessary for proper spine maturation and contributing to systemic energy homeostasis and appetite control. Binds to palmitoyl-CoA, but does not have carnitine palmitoyltransferase 1 catalytic activity or at very low levels. This chain is Palmitoyl thioesterase CPT1C (Cpt1c), found in Rattus norvegicus (Rat).